Reading from the N-terminus, the 447-residue chain is Signal recognition particle 54 kDa protein (447 aa).

Residues 103 to 110, 185 to 189, and 245 to 248 contribute to the GTP site; these read GVQGSGKT, DTAGR, and TKMD.

Belongs to the GTP-binding SRP family. SRP54 subfamily. In terms of assembly, part of the signal recognition particle protein translocation system, which is composed of SRP and FtsY. Archaeal SRP consists of a 7S RNA molecule of 300 nucleotides and two protein subunits: SRP54 and SRP19.

Its subcellular location is the cytoplasm. It carries out the reaction GTP + H2O = GDP + phosphate + H(+). Its function is as follows. Involved in targeting and insertion of nascent membrane proteins into the cytoplasmic membrane. Binds to the hydrophobic signal sequence of the ribosome-nascent chain (RNC) as it emerges from the ribosomes. The SRP-RNC complex is then targeted to the cytoplasmic membrane where it interacts with the SRP receptor FtsY. This is Signal recognition particle 54 kDa protein from Saccharolobus islandicus (strain L.S.2.15 / Lassen #1) (Sulfolobus islandicus).